We begin with the raw amino-acid sequence, 215 residues long: Cytochrome b6 (215 aa).

The chain crosses the membrane as a helical span at residues 32-52; the sequence is IFYCLGGITFTSFLVQVATGF. C35 is a binding site for heme c. The heme b site is built by H86 and H100. A run of 3 helical transmembrane segments spans residues 90–110, 116–136, and 186–206; these read ASMM…TGGF, LTWV…VTGY, and LHTF…FLMI. 2 residues coordinate heme b: H187 and H202.

It belongs to the cytochrome b family. PetB subfamily. The 4 large subunits of the cytochrome b6-f complex are cytochrome b6, subunit IV (17 kDa polypeptide, PetD), cytochrome f and the Rieske protein, while the 4 small subunits are PetG, PetL, PetM and PetN. The complex functions as a dimer. It depends on heme b as a cofactor. Heme c is required as a cofactor.

It is found in the plastid. The protein resides in the chloroplast thylakoid membrane. Functionally, component of the cytochrome b6-f complex, which mediates electron transfer between photosystem II (PSII) and photosystem I (PSI), cyclic electron flow around PSI, and state transitions. This chain is Cytochrome b6, found in Oltmannsiellopsis viridis (Marine flagellate).